The sequence spans 614 residues: Glucose oxidase 1 (614 aa).

The signal sequence occupies residues 1-15 (MKSIILSCFVISAAA). Positions 52, 53, and 73 each coordinate FAD. N-linked (GlcNAc...) asparagine glycosylation is present at Asn-112. The interval 117 to 136 (IRSGNGLGGSTLTNGGSWTR) is disordered. FAD is bound by residues Ser-126, Asn-130, Gly-131, and Ser-133. 2 N-linked (GlcNAc...) asparagine glycosylation sites follow: Asn-184 and Asn-191. Cys-187 and Cys-229 are disulfide-bonded. Val-273 is an FAD binding site. Asn-279, Asn-383, and Asn-416 each carry an N-linked (GlcNAc...) asparagine glycan. Residue His-544 is the Proton acceptor of the active site. O2-binding residues include Arg-565 and Val-566. Positions 577 and 589 each coordinate FAD.

It belongs to the GMC oxidoreductase family. Homodimer. FAD serves as cofactor.

The protein resides in the secreted. Its subcellular location is the cell wall. The protein localises to the cytoplasm. It is found in the extracellular space. It localises to the extracellular matrix. The enzyme catalyses beta-D-glucose + O2 = D-glucono-1,5-lactone + H2O2. In terms of biological role, glucose oxidase catalyzes the oxidation of beta-D-glucose to D-glucono-delta-lactone and hydrogen peroxide in the presence of molecular oxygen. This Penicillium expansum (Blue mold rot fungus) protein is Glucose oxidase 1.